Reading from the N-terminus, the 365-residue chain is MSHNTFGHLFRVTTWGESHGPALGCVVDGCPPGLRFTLADIQTWLDKRKPGQSRFVTQRREDDLVKVLSGVMLDDDGETMISTGTPISMLIENTDQRSKDYSEIAKRYRPGHADYTYDVKYGIRDYRGGGRSSARETAARVAAGAIARQVVPGLVVRGALVQIGKHRIDRANWDWAEVGKNPFFSPDPAVVPVWEEYLDGIRKAGSSIGAIVEVIAEGVPAGIGAPIYGKLDQDIAANLMSINAVKGVEIGNGFAAAEISGEDNADEMRVGAGGDAVFLSNNAGGILGGISTGQPVVARFAIKPTSSILSERRSIDSDGKEVDVRTKGRHDPCVGIRAVPIGEAMLACAIADHYLRDRGQTGRLK.

NADP(+) is bound by residues R48 and R54. FMN contacts are provided by residues 131 to 133 (RSS), 243 to 244 (NA), G288, 303 to 307 (KPTSS), and R329.

Belongs to the chorismate synthase family. As to quaternary structure, homotetramer. It depends on FMNH2 as a cofactor.

The enzyme catalyses 5-O-(1-carboxyvinyl)-3-phosphoshikimate = chorismate + phosphate. The protein operates within metabolic intermediate biosynthesis; chorismate biosynthesis; chorismate from D-erythrose 4-phosphate and phosphoenolpyruvate: step 7/7. Functionally, catalyzes the anti-1,4-elimination of the C-3 phosphate and the C-6 proR hydrogen from 5-enolpyruvylshikimate-3-phosphate (EPSP) to yield chorismate, which is the branch point compound that serves as the starting substrate for the three terminal pathways of aromatic amino acid biosynthesis. This reaction introduces a second double bond into the aromatic ring system. This Sinorhizobium medicae (strain WSM419) (Ensifer medicae) protein is Chorismate synthase.